A 186-amino-acid chain; its full sequence is Superoxide dismutase [Cu-Zn] (186 aa).

The signal sequence occupies residues 1-20; sequence MKKTVLALMFSCGMVASAFA. Residues histidine 79, histidine 81, and histidine 104 each contribute to the Cu cation site. Cysteine 86 and cysteine 182 are oxidised to a cystine. Positions 104, 113, 122, and 125 each coordinate Zn(2+). Histidine 160 contributes to the Cu cation binding site.

Belongs to the Cu-Zn superoxide dismutase family. In terms of assembly, homodimer. Cu cation is required as a cofactor. Requires Zn(2+) as cofactor.

It is found in the periplasm. The catalysed reaction is 2 superoxide + 2 H(+) = H2O2 + O2. Functionally, destroys radicals which are normally produced within the cells and which are toxic to biological systems. This is Superoxide dismutase [Cu-Zn] (sodC) from Pasteurella multocida (strain Pm70).